A 379-amino-acid polypeptide reads, in one-letter code: Orotidine 5'-phosphate decarboxylase (379 aa).

Residues Asp-42, 64–66 (KTH), and 99–108 (DRKFGDIGHT) each bind substrate. The active-site Proton donor is Lys-101. A disordered region spans residues 165–198 (PTMDQFDDAEDAKDDEPATVNDNGSNMMEKPIYA). Over residues 169 to 178 (QFDDAEDAKD) the composition is skewed to acidic residues. Substrate-binding residues include Tyr-331 and Arg-350.

This sequence belongs to the OMP decarboxylase family.

The catalysed reaction is orotidine 5'-phosphate + H(+) = UMP + CO2. It functions in the pathway pyrimidine metabolism; UMP biosynthesis via de novo pathway; UMP from orotate: step 2/2. The protein is Orotidine 5'-phosphate decarboxylase (pyr4) of Hypocrea atroviridis (Trichoderma atroviride).